Here is a 645-residue protein sequence, read N- to C-terminus: Threonine--tRNA ligase (645 aa).

The TGS domain occupies 1–62 (MSIHITFPDG…VEDGSLEIVT (62 aa)). The segment at 242–541 (DHRKLGKELD…LTEVYKGAFP (300 aa)) is catalytic. Zn(2+)-binding residues include cysteine 336, histidine 387, and histidine 518.

This sequence belongs to the class-II aminoacyl-tRNA synthetase family. As to quaternary structure, homodimer. Requires Zn(2+) as cofactor.

Its subcellular location is the cytoplasm. It catalyses the reaction tRNA(Thr) + L-threonine + ATP = L-threonyl-tRNA(Thr) + AMP + diphosphate + H(+). Its function is as follows. Catalyzes the attachment of threonine to tRNA(Thr) in a two-step reaction: L-threonine is first activated by ATP to form Thr-AMP and then transferred to the acceptor end of tRNA(Thr). Also edits incorrectly charged L-seryl-tRNA(Thr). The chain is Threonine--tRNA ligase from Enterococcus faecalis (strain ATCC 700802 / V583).